The chain runs to 922 residues: Pyruvate dehydrogenase E1 component (922 aa).

As to quaternary structure, homodimer. Part of an unusual ODH/PDH supercomplex, consisting of AceE (E1), AceF (E2), and Lpd (E3) together with OdhA (E1+E2). Requires Mg(2+) as cofactor. The cofactor is thiamine diphosphate.

It catalyses the reaction N(6)-[(R)-lipoyl]-L-lysyl-[protein] + pyruvate + H(+) = N(6)-[(R)-S(8)-acetyldihydrolipoyl]-L-lysyl-[protein] + CO2. Functionally, is a specific component of the pyruvate dehydrogenase (PDH) complex, that catalyzes the overall conversion of pyruvate to acetyl-CoA and CO(2). AceE has reductase activity with pyruvate but does not react with 2-oxoglutarate. This is Pyruvate dehydrogenase E1 component (aceE) from Corynebacterium glutamicum (strain ATCC 13032 / DSM 20300 / JCM 1318 / BCRC 11384 / CCUG 27702 / LMG 3730 / NBRC 12168 / NCIMB 10025 / NRRL B-2784 / 534).